The chain runs to 140 residues: Small ribosomal subunit protein uS19 (140 aa).

The segment at 55 to 74 (LAEARESGTEETANNPIRTH) is disordered.

Belongs to the universal ribosomal protein uS19 family.

Functionally, protein S19 forms a complex with S13 that binds strongly to the 16S ribosomal RNA. This chain is Small ribosomal subunit protein uS19, found in Halobacterium salinarum (strain ATCC 29341 / DSM 671 / R1).